A 231-amino-acid chain; its full sequence is Phosphatidylserine decarboxylase proenzyme (231 aa).

The active-site Schiff-base intermediate with substrate; via pyruvic acid is S188. Pyruvic acid (Ser); by autocatalysis is present on S188.

This sequence belongs to the phosphatidylserine decarboxylase family. PSD-A subfamily. Heterodimer of a large membrane-associated beta subunit and a small pyruvoyl-containing alpha subunit. Pyruvate serves as cofactor. In terms of processing, is synthesized initially as an inactive proenzyme. Formation of the active enzyme involves a self-maturation process in which the active site pyruvoyl group is generated from an internal serine residue via an autocatalytic post-translational modification. Two non-identical subunits are generated from the proenzyme in this reaction, and the pyruvate is formed at the N-terminus of the alpha chain, which is derived from the carboxyl end of the proenzyme. The post-translation cleavage follows an unusual pathway, termed non-hydrolytic serinolysis, in which the side chain hydroxyl group of the serine supplies its oxygen atom to form the C-terminus of the beta chain, while the remainder of the serine residue undergoes an oxidative deamination to produce ammonia and the pyruvoyl prosthetic group on the alpha chain.

The protein localises to the cell membrane. The catalysed reaction is a 1,2-diacyl-sn-glycero-3-phospho-L-serine + H(+) = a 1,2-diacyl-sn-glycero-3-phosphoethanolamine + CO2. The protein operates within phospholipid metabolism; phosphatidylethanolamine biosynthesis; phosphatidylethanolamine from CDP-diacylglycerol: step 2/2. Its function is as follows. Catalyzes the formation of phosphatidylethanolamine (PtdEtn) from phosphatidylserine (PtdSer). The protein is Phosphatidylserine decarboxylase proenzyme of Rickettsia bellii (strain OSU 85-389).